The primary structure comprises 1003 residues: PHD finger protein 12 (1003 aa).

The interval 29–59 (APPKTDEAEKRSRKPEKESRRSGRATNHDSC) is disordered. Positions 32–59 (KTDEAEKRSRKPEKESRRSGRATNHDSC) are enriched in basic and acidic residues. The PHD-type 1 zinc finger occupies 56-105 (HDSCDSCKEGGDLLCCDHCPAAFHLQCCNPPLSEEMLPPGEWMCHRCTVR). Zn(2+)-binding residues include Cys59, Ser61, Cys62, His79, and Cys82. Disordered stretches follow at residues 110–183 (EQKK…HNDV) and 234–255 (TTALPGSSKRRRKEETTGKNVK). Phosphoserine occurs at positions 131 and 134. A compositionally biased stretch (basic and acidic residues) spans 138–161 (LLDRPASKTELKAIAHARILERRA). The segment covering 165-178 (GTPTSNASTETPTS) has biased composition (polar residues). The tract at residues 202-241 (VQPQLRRPFELLIAAAMERNPTQFQLPNELTCTTALPGSS) is SIN3 interacting domain 1. A PHD-type 2; atypical zinc finger spans residues 271–321 (VKVCFTCNRSCRVAPLIQCDYCPLLFHMDCLEPPLTAMPLGRWMCPNHIEH). Residues Cys274, Cys277, Cys289, Cys292, His297, Cys300, Cys315, and His318 each coordinate Zn(2+). The SIN3 interacting domain 2 stretch occupies residues 328 to 364 (NLTLSNRCQVFDRFQDTISQHVVKVDFLNRIHKKHPP). Lys467 is covalently cross-linked (Glycyl lysine isopeptide (Lys-Gly) (interchain with G-Cter in SUMO2)). Disordered regions lie at residues 531 to 583 (KAPC…GWPR) and 641 to 671 (HRKTVQSQIGPSSTESRPLGSPPNATRVLTP). At Ser555 the chain carries Phosphoserine. 2 positions are modified to phosphothreonine: Thr557 and Thr570. A compositionally biased stretch (polar residues) spans 641 to 656 (HRKTVQSQIGPSSTES). Thr670 is subject to Phosphothreonine. Residues 814–868 (LYIGTGADMDVCLTNYGHCNYVSGKHACIFYDENTKHYELLNYSEHGTTVDNVLY) form the FHA domain. Residues 894–922 (RRRHQKQDEEPSEEAAMMSSQAQGPQRRP) are disordered. Lys899 participates in a covalent cross-link: Glycyl lysine isopeptide (Lys-Gly) (interchain with G-Cter in SUMO2). A compositionally biased stretch (low complexity) spans 907–916 (EAAMMSSQAQ). Residues Lys972, Lys986, and Lys990 each participate in a glycyl lysine isopeptide (Lys-Gly) (interchain with G-Cter in SUMO2) cross-link.

In terms of assembly, component of SIN3 complexes. Interacts with SIN3A in a complex composed of HDAC1, SAP30 and SIN3A. Component of the SIN3B complex, which includes SIN3B, HDAC2 or HDAC1, PHF12 and MORF4L1; interacts directly with all subunits. Interacts with TLE5. In terms of tissue distribution, expressed mainly in heart, brain, lung, liver and testis.

The protein localises to the nucleus. Its function is as follows. Transcriptional repressor acting as key scaffolding subunit of SIN3 complexes which contributes to complex assembly by contacting each core subunit domain, stabilizes the complex and constitutes the substrate receptor by recruiting the H3 histone tail. SIN3 complexes are composed of a SIN3 scaffold subunit, one catalytic core (HDAC1 or HDAC2) and 2 chromatin targeting modules. SIN3B complex represses transcription and counteracts the histone acetyltransferase activity of EP300 through the recognition H3K27ac marks by PHF12 and the activity of the histone deacetylase HDAC2. SIN3B complex is recruited downstream of the constitutively active genes transcriptional start sites through interaction with histones and mitigates histone acetylation and RNA polymerase II progression within transcribed regions contributing to the regulation of transcription. May also repress transcription in a SIN3A-independent manner through recruitment of functional TLE5 complexes to DNA. May also play a role in ribosomal biogenesis. The sequence is that of PHD finger protein 12 from Mus musculus (Mouse).